The chain runs to 336 residues: Meiotically up-regulated gene 33 protein (336 aa).

The interval 232–336 (ISEDDGLKRG…KPSRFSWGRS (105 aa)) is disordered. Positions 250–262 (TFSNDSRSLSSYA) are enriched in polar residues.

The protein localises to the cytoplasm. In terms of biological role, has a role in meiosis. The polypeptide is Meiotically up-regulated gene 33 protein (mug33) (Schizosaccharomyces pombe (strain 972 / ATCC 24843) (Fission yeast)).